We begin with the raw amino-acid sequence, 940 residues long: Isoleucine--tRNA ligase (940 aa).

The 'HIGH' region motif lies at 58-68 (PYANGAIHIGH). An L-isoleucyl-5'-AMP-binding site is contributed by glutamate 564. Positions 605–609 (KMSKS) match the 'KMSKS' region motif. Lysine 608 contacts ATP. Residues cysteine 903, cysteine 906, cysteine 923, and cysteine 926 each coordinate Zn(2+).

Belongs to the class-I aminoacyl-tRNA synthetase family. IleS type 1 subfamily. Monomer. It depends on Zn(2+) as a cofactor.

The protein resides in the cytoplasm. It catalyses the reaction tRNA(Ile) + L-isoleucine + ATP = L-isoleucyl-tRNA(Ile) + AMP + diphosphate. Its function is as follows. Catalyzes the attachment of isoleucine to tRNA(Ile). As IleRS can inadvertently accommodate and process structurally similar amino acids such as valine, to avoid such errors it has two additional distinct tRNA(Ile)-dependent editing activities. One activity is designated as 'pretransfer' editing and involves the hydrolysis of activated Val-AMP. The other activity is designated 'posttransfer' editing and involves deacylation of mischarged Val-tRNA(Ile). This is Isoleucine--tRNA ligase from Nitrosococcus oceani (strain ATCC 19707 / BCRC 17464 / JCM 30415 / NCIMB 11848 / C-107).